The sequence spans 121 residues: Small ribosomal subunit protein uS13 (121 aa).

Positions 92-121 are disordered; that stretch reads RKGLPVRGQRTKTNARTRKGPRKSGVQLKK.

Belongs to the universal ribosomal protein uS13 family. As to quaternary structure, part of the 30S ribosomal subunit. Forms a loose heterodimer with protein S19. Forms two bridges to the 50S subunit in the 70S ribosome.

In terms of biological role, located at the top of the head of the 30S subunit, it contacts several helices of the 16S rRNA. In the 70S ribosome it contacts the 23S rRNA (bridge B1a) and protein L5 of the 50S subunit (bridge B1b), connecting the 2 subunits; these bridges are implicated in subunit movement. Contacts the tRNAs in the A and P-sites. The protein is Small ribosomal subunit protein uS13 of Polynucleobacter asymbioticus (strain DSM 18221 / CIP 109841 / QLW-P1DMWA-1) (Polynucleobacter necessarius subsp. asymbioticus).